Reading from the N-terminus, the 1134-residue chain is Mediator of RNA polymerase II transcription subunit 12 (1134 aa).

Belongs to the Mediator complex subunit 12 family. As to quaternary structure, component of the srb8-11 complex which consists of rb8, srb9(TRAP240), srb10 and srb11. The srb8-11 complex associates with the Mediator complex thereby blocking association with RNA polymerase II and leading to reduced transcriptional activation by Mediator.

The protein localises to the nucleus. Component of the srb8-11 complex. The srb8-11 complex is a regulatory module of the Mediator complex which is itself involved in regulation of basal and activated RNA polymerase II-dependent transcription. The srb8-11 complex may be involved in the transcriptional repression of a subset of genes regulated by Mediator. It may inhibit the association of the Mediator complex with RNA polymerase II to form the holoenzyme complex. This is Mediator of RNA polymerase II transcription subunit 12 (srb8) from Schizosaccharomyces pombe (strain 972 / ATCC 24843) (Fission yeast).